The chain runs to 274 residues: WIMGHMVNAIEQVDKFLNLGANAIEFDIDFDKDGIAQITHHGIPCDCGRKCTKKAIFTEYLDNIRQVTTPDDPKFREQLVLLALDLKLQRISSAKAYRAGEDVAKKLPDHYWQRGNSRARAYILLNIPLVEDYEFIRAFKDTLKNEGYESYNDKVGINFTGNEDLDKIRDVLEILGIHKQVWQADGITSCFARGTERLKEALEKRDTPGYNYINKVYAWTLVRKSIMRRSLRLGVDGVMSNNPDRVIKVLKEKEFADKFRLATYNDNPWEKFRG.

His-5 is an active-site residue. Positions 25 and 27 each coordinate Mg(2+). His-41 (nucleophile) is an active-site residue. Cystine bridges form between Cys-45-Cys-51 and Cys-47-Cys-190. Asp-85 serves as a coordination point for Mg(2+).

Belongs to the arthropod phospholipase D family. Class II subfamily. Mg(2+) serves as cofactor. As to expression, expressed by the venom gland.

The protein resides in the secreted. It catalyses the reaction an N-(acyl)-sphingosylphosphocholine = an N-(acyl)-sphingosyl-1,3-cyclic phosphate + choline. It carries out the reaction an N-(acyl)-sphingosylphosphoethanolamine = an N-(acyl)-sphingosyl-1,3-cyclic phosphate + ethanolamine. The catalysed reaction is a 1-acyl-sn-glycero-3-phosphocholine = a 1-acyl-sn-glycero-2,3-cyclic phosphate + choline. The enzyme catalyses a 1-acyl-sn-glycero-3-phosphoethanolamine = a 1-acyl-sn-glycero-2,3-cyclic phosphate + ethanolamine. In terms of biological role, dermonecrotic toxins cleave the phosphodiester linkage between the phosphate and headgroup of certain phospholipids (sphingolipid and lysolipid substrates), forming an alcohol (often choline) and a cyclic phosphate. This toxin acts on sphingomyelin (SM). It may also act on ceramide phosphoethanolamine (CPE), lysophosphatidylcholine (LPC) and lysophosphatidylethanolamine (LPE), but not on lysophosphatidylserine (LPS), and lysophosphatidylglycerol (LPG). It acts by transphosphatidylation, releasing exclusively cyclic phosphate products as second products. Induces dermonecrosis, hemolysis, increased vascular permeability, edema, inflammatory response, and platelet aggregation. This is Dermonecrotic toxin SdSicTox-betaIIB1bix from Sicarius cf. damarensis (strain GJB-2008) (Six-eyed sand spider).